A 204-amino-acid chain; its full sequence is uncharacterized protein (204 aa).

The interval 118 to 169 is disordered; it reads FPAASERPMPSRRLSKATQNVQTRPSERPAPCHRRPGPRGPGGRDPPEACHP.

This is an uncharacterized protein from Encephalitozoon cuniculi (strain GB-M1) (Microsporidian parasite).